The primary structure comprises 302 residues: Probable alpha-L-glutamate ligase (302 aa).

The region spanning 105–288 is the ATP-grasp domain; sequence LQLLARKGIP…LAGKIIEYIE (184 aa). ATP contacts are provided by residues K142, 179–180, D188, and 212–214; these read EF and RAN. Residues D249, E261, and N263 each contribute to the Mg(2+) site. Mn(2+) contacts are provided by D249, E261, and N263.

It belongs to the RimK family. The cofactor is Mg(2+). Mn(2+) serves as cofactor.

This Legionella pneumophila (strain Paris) protein is Probable alpha-L-glutamate ligase.